A 343-amino-acid chain; its full sequence is Putative ALA-interacting subunit 2 (343 aa).

A helical membrane pass occupies residues 43 to 63; the sequence is PISVITVFMLMGFVFIPIGLI. Residues Asn-103, Asn-178, Asn-191, and Asn-218 are each glycosylated (N-linked (GlcNAc...) asparagine). Residues 301–321 form a helical membrane-spanning segment; that stretch reads FLGITYLVVGSSSIVISIIFM.

This sequence belongs to the CDC50/LEM3 family. As to expression, expressed in roots, leaves, stems, flowers and siliques.

Its subcellular location is the membrane. This chain is Putative ALA-interacting subunit 2 (ALIS2), found in Arabidopsis thaliana (Mouse-ear cress).